Reading from the N-terminus, the 500-residue chain is Cryptochrome DASH (500 aa).

One can recognise a Photolyase/cryptochrome alpha/beta domain in the interval 4–138 (KTVLVWYRND…PVRSFWGTTL (135 aa)).

The protein belongs to the DNA photolyase class-1 family. The cofactor is FAD. Requires (6R)-5,10-methylene-5,6,7,8-tetrahydrofolate as cofactor.

In terms of biological role, may have a photoreceptor function. Binds DNA; probably functions as a transcriptional repressor. The protein is Cryptochrome DASH (cry) of Gloeobacter violaceus (strain ATCC 29082 / PCC 7421).